A 569-amino-acid chain; its full sequence is Protein ste7 (569 aa).

Disordered regions lie at residues A195 to V219 and F255 to I274. Over residues T198–V219 the composition is skewed to low complexity. The span at P264 to I274 shows a compositional bias: pro residues.

The protein belongs to the arrestin family.

Functionally, has a role in promoting meiosis whereby it is involved in establishing the mating pheromone signaling pathway. It also has a role in suppressing meiosis until the conjugation process is complete. This is Protein ste7 (ste7) from Schizosaccharomyces pombe (strain 972 / ATCC 24843) (Fission yeast).